The primary structure comprises 366 residues: Cobalt-precorrin-5B C(1)-methyltransferase (366 aa).

The protein belongs to the CbiD family.

The catalysed reaction is Co-precorrin-5B + S-adenosyl-L-methionine = Co-precorrin-6A + S-adenosyl-L-homocysteine. The protein operates within cofactor biosynthesis; adenosylcobalamin biosynthesis; cob(II)yrinate a,c-diamide from sirohydrochlorin (anaerobic route): step 6/10. Functionally, catalyzes the methylation of C-1 in cobalt-precorrin-5B to form cobalt-precorrin-6A. The protein is Cobalt-precorrin-5B C(1)-methyltransferase of Thermoanaerobacter sp. (strain X514).